The following is a 242-amino-acid chain: Beta-carotene ketolase (242 aa).

It carries out the reaction all-trans-beta-carotene + 2 AH2 + 2 O2 = echinenone + 2 A + 3 H2O. The enzyme catalyses echinenone + 2 AH2 + 2 O2 = canthaxanthin + 2 A + 3 H2O. The protein operates within carotenoid biosynthesis; astaxanthin biosynthesis. Converts beta-carotene to canthaxanthin via echinenone. The chain is Beta-carotene ketolase (crtW) from Paracoccus sp. (strain N81106 / MBIC 01143) (Agrobacterium aurantiacum).